The primary structure comprises 1158 residues: Phospholipid-transporting ATPase 1 (1158 aa).

The segment covering 1 to 15 (MDPRKSIDKPPHHDP) has biased composition (basic and acidic residues). Positions 1–30 (MDPRKSIDKPPHHDPILGVSSRWSVSSKDN) are disordered. At 1–100 (MDPRKSIDKP…TAKYSVFTFL (100 aa)) the chain is on the cytoplasmic side. A helical membrane pass occupies residues 101 to 122 (PRNLFEQFHRVAYIYFLVIAVL). The Extracellular portion of the chain corresponds to 123–127 (NQLPQ). A helical membrane pass occupies residues 128-150 (LAVFGRGASIMPLAFVLLVSAIK). The Cytoplasmic segment spans residues 151 to 329 (DAYEDFRRHR…SRLETRMNLE (179 aa)). The chain crosses the membrane as a helical span at residues 330-351 (IILLSLFLIVLCTIAAATAAVW). At 352 to 391 (LRTHRDDLDTILFYRRKDYSERPGGKNYKYYGWGWEIFFT) the chain is on the extracellular side. The chain crosses the membrane as a helical span at residues 392–409 (FFMAVIVYQIMIPISLYI). The Cytoplasmic segment spans residues 410-914 (SMELVRIGQA…HGHWNYQRMG (505 aa)). D457 serves as the catalytic 4-aspartylphosphate intermediate. 2 residues coordinate Mg(2+): D859 and D863. A helical membrane pass occupies residues 915 to 934 (YMILYNFYRNAVFVLILFWY). Over 935 to 948 (VLFTCYTLTTAITE) the chain is Extracellular. A helical membrane pass occupies residues 949–968 (WSSVLYSVIYTAIPTIIIGI). The Cytoplasmic portion of the chain corresponds to 969–998 (LDKDLGRQTLLDHPQLYGVGQRAEGYSTTL). Residues 999–1020 (FWYTMIDTIWQSAAIFFIPMFA) traverse the membrane as a helical segment. The Extracellular segment spans residues 1021–1027 (YWGSTID). The helical transmembrane segment at 1028–1050 (TSSLGDLWTIAAVVVVNLHLAMD) threads the bilayer. The Cytoplasmic segment spans residues 1051-1056 (VIRWNW). Residues 1057 to 1077 (ITHAAIWGSIVAACICVIVID) traverse the membrane as a helical segment. Residues 1078–1090 (VIPTLPGYWAIFQ) lie on the Extracellular side of the membrane. A helical transmembrane segment spans residues 1091 to 1115 (VGKTWMFWFCLLAIVVTSLLPRFAI). The Cytoplasmic portion of the chain corresponds to 1116-1158 (KFLVEYYRPSDVRIAREAEKLGTFRESQPVGVEMNLIQDPPRR).

This sequence belongs to the cation transport ATPase (P-type) (TC 3.A.3) family. Type IV subfamily. Expressed in roots, flowers, anthers, leaves, vascular tissues and stems.

The protein resides in the endoplasmic reticulum membrane. It is found in the cell membrane. It catalyses the reaction ATP + H2O + phospholipidSide 1 = ADP + phosphate + phospholipidSide 2.. Its function is as follows. Involved in transport of phospholipids. Contributes to transmembrane flipping of lipids. Has activity with phosphatidylserine and with a much lower efficiency with phosphatidylethanolamine, but not with phosphatidylcholine. This is Phospholipid-transporting ATPase 1 from Arabidopsis thaliana (Mouse-ear cress).